We begin with the raw amino-acid sequence, 371 residues long: Solute carrier family 35 member F6 (371 aa).

An N-terminal signal peptide occupies residues 1-18 (MAWTKYQLFLAGLMLVTG). The next 2 membrane-spanning stretches (helical) occupy residues 48-68 (FLQA…FYLL) and 89-109 (LLFL…YVAL). In terms of domain architecture, EamA spans 104–160 (LMYVALNMTSASSFQMLRGAVIIFTGLFSVAFLGRRLVLSQWLGILATIAGLVVVGL). Asparagine 110 is a glycosylation site (N-linked (GlcNAc...) asparagine). Helical transmembrane passes span 117–137 (FQML…AFLG), 140–160 (LVLS…VVGL), 176–196 (VITG…QMVL), 216–236 (GLFG…IPAG), 261–281 (LIAV…FAGI), 295–312 (LDSL…ALGW), and 317–336 (ALQI…YNGL). Residues 352 to 371 (EESEQERLLGGTRTPINDAS) form a disordered region. Threonine 365 is modified (phosphothreonine).

It belongs to the SLC35F solute transporter family. As to quaternary structure, interacts with SLC25A5. As to expression, expressed in pancreatic ductal adenocarcinoma (PDAC) (at protein level). Strongly expressed in prostate and thyroid. Weakly expressed in lung, heart, liver and kidney.

It is found in the mitochondrion. Its subcellular location is the lysosome membrane. Its function is as follows. Involved in the maintenance of mitochondrial membrane potential in pancreatic ductal adenocarcinoma (PDAC) cells. Promotes pancreatic ductal adenocarcinoma (PDAC) cell growth. May play a role as a nucleotide-sugar transporter. This chain is Solute carrier family 35 member F6 (SLC35F6), found in Homo sapiens (Human).